The sequence spans 631 residues: MSATKLTRREQRAQAQHFIDTLEGTAFPNSKRIYITGTQPGVRVPMREIQLSPTLIGGSKEQPQYEENEAIPVYDTSGPYGDPQIAINVQQGLAKLRQPWIDARGDTEELTVRSSDYTKARLADDGLDELRFSGVLTPKRAKAGRRVTQLHYARQGIITPEMEFIAIRENMGRERIRSEVLRHQHPGMSFGARLPENITAEFVRDEVAAGRAIIPANINHPESEPMIIGRNFLVKVNANIGNSAVTSSIEEEVEKLVWSTRWGADTVMDLSTGRYIHETREWILRNSPVPIGTVPIYQALEKVNGIAEDLTWEAFRDTLLEQAEQGVDYFTIHAGVLLRYVPMTAKRLTGIVSRGGSIMAKWCLSHHQENFLYQHFREICEICAAYDVSLSLGDGLRPGSIQDANDEAQFAELHTLGELTKIAWEYDVQVMIEGPGHVPMQMIRRNMTEELEHCHEAPFYTLGPLTTDIAPGYDHFTSGIGAAMIGWFGCAMLCYVTPKEHLGLPNKEDVKQGLITYKIAAHAADLAKGHPGAQIRDNAMSKARFEFRWEDQFNLALDPFTARAYHDETLPQESGKVAHFCSMCGPKFCSMKISQEVRDYAATQTIEMGIADMSENFRARGGEIYLRKEEA.

Substrate is bound by residues Asn-239, Met-268, Tyr-297, His-333, 353-355 (SRG), 394-397 (DGLR), and Glu-433. His-437 provides a ligand contact to Zn(2+). Substrate is bound at residue Tyr-460. His-501 provides a ligand contact to Zn(2+). Residues Cys-581, Cys-584, and Cys-589 each coordinate [4Fe-4S] cluster.

This sequence belongs to the ThiC family. As to quaternary structure, homodimer. It depends on [4Fe-4S] cluster as a cofactor.

The catalysed reaction is 5-amino-1-(5-phospho-beta-D-ribosyl)imidazole + S-adenosyl-L-methionine = 4-amino-2-methyl-5-(phosphooxymethyl)pyrimidine + CO + 5'-deoxyadenosine + formate + L-methionine + 3 H(+). Its pathway is cofactor biosynthesis; thiamine diphosphate biosynthesis. Functionally, catalyzes the synthesis of the hydroxymethylpyrimidine phosphate (HMP-P) moiety of thiamine from aminoimidazole ribotide (AIR) in a radical S-adenosyl-L-methionine (SAM)-dependent reaction. The polypeptide is Phosphomethylpyrimidine synthase (Escherichia coli O157:H7).